The following is a 904-amino-acid chain: Protein translocase subunit SecA (904 aa).

ATP-binding positions include glutamine 87, 105-109, and aspartate 512; that span reads GEGKT. Residues 851–904 form a disordered region; the sequence is LAKQQQLSHESDNSALMSQEEANVAASLERKVGRNDPCPCGSGKKYKQCHGRLQ. A compositionally biased stretch (polar residues) spans 853–871; it reads KQQQLSHESDNSALMSQEE. Cysteine 888, cysteine 890, cysteine 899, and histidine 900 together coordinate Zn(2+). Positions 894 to 904 are enriched in basic residues; it reads KKYKQCHGRLQ.

Belongs to the SecA family. In terms of assembly, monomer and homodimer. Part of the essential Sec protein translocation apparatus which comprises SecA, SecYEG and auxiliary proteins SecDF-YajC and YidC. Requires Zn(2+) as cofactor.

The protein localises to the cell inner membrane. It is found in the cytoplasm. The enzyme catalyses ATP + H2O + cellular proteinSide 1 = ADP + phosphate + cellular proteinSide 2.. Part of the Sec protein translocase complex. Interacts with the SecYEG preprotein conducting channel. Has a central role in coupling the hydrolysis of ATP to the transfer of proteins into and across the cell membrane, serving both as a receptor for the preprotein-SecB complex and as an ATP-driven molecular motor driving the stepwise translocation of polypeptide chains across the membrane. The chain is Protein translocase subunit SecA from Yersinia enterocolitica serotype O:8 / biotype 1B (strain NCTC 13174 / 8081).